The sequence spans 222 residues: GTP cyclohydrolase 1 (222 aa).

Positions 111, 114, and 182 each coordinate Zn(2+).

Belongs to the GTP cyclohydrolase I family. As to quaternary structure, homomer.

The catalysed reaction is GTP + H2O = 7,8-dihydroneopterin 3'-triphosphate + formate + H(+). It participates in cofactor biosynthesis; 7,8-dihydroneopterin triphosphate biosynthesis; 7,8-dihydroneopterin triphosphate from GTP: step 1/1. The protein is GTP cyclohydrolase 1 of Shigella boydii serotype 18 (strain CDC 3083-94 / BS512).